The primary structure comprises 334 residues: Mevalonate kinase (334 aa).

Position 110–120 (proline 110–alanine 120) interacts with ATP. The Proton acceptor role is filled by aspartate 161.

Belongs to the GHMP kinase family. Mevalonate kinase subfamily. Homodimer. The cofactor is Mg(2+).

The protein localises to the cytoplasm. The enzyme catalyses (R)-mevalonate + ATP = (R)-5-phosphomevalonate + ADP + H(+). The protein operates within isoprenoid biosynthesis; isopentenyl diphosphate biosynthesis via mevalonate pathway; isopentenyl diphosphate from (R)-mevalonate: step 1/3. In terms of biological role, catalyzes the phosphorylation of (R)-mevalonate (MVA) to (R)-mevalonate 5-phosphate (MVAP). Functions in the mevalonate (MVA) pathway leading to isopentenyl diphosphate (IPP), a key precursor for the biosynthesis of isoprenoid compounds such as archaeal membrane lipids. The protein is Mevalonate kinase of Thermococcus onnurineus (strain NA1).